The sequence spans 121 residues: Ribonuclease P protein component (121 aa).

Belongs to the RnpA family. Consists of a catalytic RNA component (M1 or rnpB) and a protein subunit.

The catalysed reaction is Endonucleolytic cleavage of RNA, removing 5'-extranucleotides from tRNA precursor.. In terms of biological role, RNaseP catalyzes the removal of the 5'-leader sequence from pre-tRNA to produce the mature 5'-terminus. It can also cleave other RNA substrates such as 4.5S RNA. The protein component plays an auxiliary but essential role in vivo by binding to the 5'-leader sequence and broadening the substrate specificity of the ribozyme. In Nitrosomonas eutropha (strain DSM 101675 / C91 / Nm57), this protein is Ribonuclease P protein component.